The sequence spans 430 residues: 3-phosphoshikimate 1-carboxyvinyltransferase (430 aa).

3-phosphoshikimate-binding residues include Lys23, Ser24, and Arg28. Residue Lys23 coordinates phosphoenolpyruvate. Phosphoenolpyruvate contacts are provided by Gly95 and Arg123. 4 residues coordinate 3-phosphoshikimate: Ser169, Gln171, Asp315, and Lys342. Gln171 contributes to the phosphoenolpyruvate binding site. The active-site Proton acceptor is the Asp315. 2 residues coordinate phosphoenolpyruvate: Arg346 and Arg388.

It belongs to the EPSP synthase family. In terms of assembly, monomer.

It is found in the cytoplasm. It catalyses the reaction 3-phosphoshikimate + phosphoenolpyruvate = 5-O-(1-carboxyvinyl)-3-phosphoshikimate + phosphate. It functions in the pathway metabolic intermediate biosynthesis; chorismate biosynthesis; chorismate from D-erythrose 4-phosphate and phosphoenolpyruvate: step 6/7. In terms of biological role, catalyzes the transfer of the enolpyruvyl moiety of phosphoenolpyruvate (PEP) to the 5-hydroxyl of shikimate-3-phosphate (S3P) to produce enolpyruvyl shikimate-3-phosphate and inorganic phosphate. This Streptococcus pyogenes serotype M6 (strain ATCC BAA-946 / MGAS10394) protein is 3-phosphoshikimate 1-carboxyvinyltransferase.